The sequence spans 138 residues: PTS system sorbose-specific EIIA component (138 aa).

The 125-residue stretch at 1–125 (MEIILVGHAH…KIKEEFSTSL (125 aa)) folds into the PTS EIIA type-4 domain. His-8 acts as the Tele-phosphohistidine intermediate in catalysis. His-8 bears the Phosphohistidine; by HPr mark.

Its subcellular location is the cytoplasm. Its function is as follows. The phosphoenolpyruvate-dependent sugar phosphotransferase system (PTS), a major carbohydrate active transport system, catalyzes the phosphorylation of incoming sugar substrates concomitant with their translocation across the cell membrane. The enzyme II SorABCD PTS system is involved in L-sorbose transport. This is PTS system sorbose-specific EIIA component from Lacticaseibacillus casei (Lactobacillus casei).